Consider the following 461-residue polypeptide: tRNA modification GTPase MnmE (461 aa).

The (6S)-5-formyl-5,6,7,8-tetrahydrofolate site is built by Lys-32, Glu-89, and Lys-128. Positions 224–387 (GHALSIVGKP…LGQKISAFFP (164 aa)) constitute a TrmE-type G domain. Residue Asn-234 coordinates K(+). Residues 234–239 (NAGKSS), 253–259 (SDIKGTT), and 278–281 (DTAG) each bind GTP. Mg(2+) is bound at residue Ser-238. The K(+) site is built by Ser-253, Ile-255, and Thr-258. Thr-259 provides a ligand contact to Mg(2+). Residue Lys-461 participates in (6S)-5-formyl-5,6,7,8-tetrahydrofolate binding.

The protein belongs to the TRAFAC class TrmE-Era-EngA-EngB-Septin-like GTPase superfamily. TrmE GTPase family. In terms of assembly, homodimer. Heterotetramer of two MnmE and two MnmG subunits. The cofactor is K(+).

It localises to the cytoplasm. In terms of biological role, exhibits a very high intrinsic GTPase hydrolysis rate. Involved in the addition of a carboxymethylaminomethyl (cmnm) group at the wobble position (U34) of certain tRNAs, forming tRNA-cmnm(5)s(2)U34. The sequence is that of tRNA modification GTPase MnmE from Helicobacter pylori (strain HPAG1).